Here is a 223-residue protein sequence, read N- to C-terminus: MQLVTASEMQKIDTYTVNTIGMPQDVLIERAALSVIDVIGAGHFNLEHILVLAGLGNNGADGVAITRLLYAQGFNVSLQFVGNVSRAKESVQRQLAIIEKYGLVRSEKSDFNEATLIIDAIFGTGLNNLLPEGLQKMIKAANHIEKTVIAIDTPTGIDATTGEVRGAALKAHTTVTFGYNKIGLTRRVGGYLSGNVIVKDIGLLTPPDFSFSDTEENHSTKDV.

The region spanning 9 to 209 is the YjeF N-terminal domain; that stretch reads MQKIDTYTVN…DIGLLTPPDF (201 aa). (6S)-NADPHX is bound at residue 57–61; sequence NNGAD. K(+)-binding residues include N58 and D119. Residues 123-129 and D152 each bind (6S)-NADPHX; that span reads GTGLNNL. T155 lines the K(+) pocket.

It belongs to the NnrE/AIBP family. K(+) serves as cofactor.

It catalyses the reaction (6R)-NADHX = (6S)-NADHX. The catalysed reaction is (6R)-NADPHX = (6S)-NADPHX. In terms of biological role, catalyzes the epimerization of the S- and R-forms of NAD(P)HX, a damaged form of NAD(P)H that is a result of enzymatic or heat-dependent hydration. This is a prerequisite for the S-specific NAD(P)H-hydrate dehydratase to allow the repair of both epimers of NAD(P)HX. This chain is NAD(P)H-hydrate epimerase, found in Leuconostoc gelidum subsp. gasicomitatum (strain DSM 15947 / CCUG 46042 / CECT 5767 / JCM 12535 / LMG 18811 / NBRC 113245 / TB1-10) (Leuconostoc gasicomitatum).